The sequence spans 265 residues: Di-trans,poly-cis-undecaprenyl-diphosphate synthase (265 aa).

Residues 236–238 carry the RXG motif; crucial for prenyltransferase activity motif; the sequence is RFG.

It belongs to the UPP synthase family. The cofactor is Mg(2+).

It catalyses the reaction 8 isopentenyl diphosphate + (2E,6E)-farnesyl diphosphate = di-trans,octa-cis-undecaprenyl diphosphate + 8 diphosphate. It participates in protein modification; protein glycosylation. It functions in the pathway lipid metabolism. Its function is as follows. Cis-prenyl transferase involved in the synthesis of dolichol, a long-chain polyprenol that is utilized as a sugar carrier in protein glycosylation in the endoplasmic reticulum (ER). Catalyzes the sequential condensation of isopentenyl pyrophosphate (IPP) with farnesyl pyrophosphate (FPP) to produce a polyprenyl pyrophosphate which contains 11 (major) and 12 (minor) isoprene units. The sequence is that of Di-trans,poly-cis-undecaprenyl-diphosphate synthase from Giardia intestinalis (strain ATCC 50803 / WB clone C6) (Giardia lamblia).